Consider the following 106-residue polypeptide: Small ribosomal subunit protein uS10 (106 aa).

This sequence belongs to the universal ribosomal protein uS10 family. Part of the 30S ribosomal subunit.

In terms of biological role, involved in the binding of tRNA to the ribosomes. The sequence is that of Small ribosomal subunit protein uS10 from Prochlorococcus marinus (strain MIT 9211).